A 413-amino-acid polypeptide reads, in one-letter code: Alpha-1-antiproteinase (413 aa).

The signal sequence occupies residues 1 to 24 (MTPSISWRLLLLAGLCCLVPSYLA). Residue Ser33 is modified to Phosphoserine. Asn64, Asn101, and Asn265 each carry an N-linked (GlcNAc...) asparagine glycan. An RCL region spans residues 368-387 (ATTIVEAVFMSLPPILHFNH). Ser378 bears the Phosphoserine mark.

Belongs to the serpin family. In terms of assembly, interacts with CELA2A. Interacts with ERGIC3 and LMAN1/ERGIC53. Interacts with PRSS1/Trypsin.

The protein resides in the secreted. Inhibitor of serine proteases. The primary target is elastase, but also has a moderate affinity for plasmin and thrombin. The sequence is that of Alpha-1-antiproteinase (Serpina1) from Mus saxicola (Brown spiny mouse).